Here is a 318-residue protein sequence, read N- to C-terminus: Cobalamin biosynthesis protein CobD (318 aa).

5 helical membrane-spanning segments follow: residues 51–71, 77–97, 153–173, 206–226, and 296–316; these read VGGV…AWGA, LVHP…CLAA, DGVI…ALAY, LIPA…AGLS, and MYGA…ILTI.

The protein belongs to the CobD/CbiB family.

Its subcellular location is the cell membrane. It participates in cofactor biosynthesis; adenosylcobalamin biosynthesis. Functionally, converts cobyric acid to cobinamide by the addition of aminopropanol on the F carboxylic group. The protein is Cobalamin biosynthesis protein CobD of Geobacter metallireducens (strain ATCC 53774 / DSM 7210 / GS-15).